We begin with the raw amino-acid sequence, 263 residues long: Hydroxyethylthiazole kinase 1 (263 aa).

Met42 serves as a coordination point for substrate. ATP contacts are provided by Lys118 and Thr164. Gly191 contacts substrate.

This sequence belongs to the Thz kinase family. Mg(2+) is required as a cofactor.

The enzyme catalyses 5-(2-hydroxyethyl)-4-methylthiazole + ATP = 4-methyl-5-(2-phosphooxyethyl)-thiazole + ADP + H(+). It functions in the pathway cofactor biosynthesis; thiamine diphosphate biosynthesis; 4-methyl-5-(2-phosphoethyl)-thiazole from 5-(2-hydroxyethyl)-4-methylthiazole: step 1/1. Catalyzes the phosphorylation of the hydroxyl group of 4-methyl-5-beta-hydroxyethylthiazole (THZ). The chain is Hydroxyethylthiazole kinase 1 from Clostridium botulinum (strain 657 / Type Ba4).